A 178-amino-acid chain; its full sequence is ATP synthase subunit delta (178 aa).

It belongs to the ATPase delta chain family. In terms of assembly, F-type ATPases have 2 components, F(1) - the catalytic core - and F(0) - the membrane proton channel. F(1) has five subunits: alpha(3), beta(3), gamma(1), delta(1), epsilon(1). F(0) has three main subunits: a(1), b(2) and c(10-14). The alpha and beta chains form an alternating ring which encloses part of the gamma chain. F(1) is attached to F(0) by a central stalk formed by the gamma and epsilon chains, while a peripheral stalk is formed by the delta and b chains.

It is found in the cell inner membrane. Functionally, f(1)F(0) ATP synthase produces ATP from ADP in the presence of a proton or sodium gradient. F-type ATPases consist of two structural domains, F(1) containing the extramembraneous catalytic core and F(0) containing the membrane proton channel, linked together by a central stalk and a peripheral stalk. During catalysis, ATP synthesis in the catalytic domain of F(1) is coupled via a rotary mechanism of the central stalk subunits to proton translocation. Its function is as follows. This protein is part of the stalk that links CF(0) to CF(1). It either transmits conformational changes from CF(0) to CF(1) or is implicated in proton conduction. The polypeptide is ATP synthase subunit delta (Chromohalobacter salexigens (strain ATCC BAA-138 / DSM 3043 / CIP 106854 / NCIMB 13768 / 1H11)).